A 316-amino-acid chain; its full sequence is Probable cell division protein WhiA (316 aa).

The H-T-H motif DNA-binding region spans 276–309 (SLEELGKIAEPQITKDAIAGRIRRLLQLAEKTEK).

Belongs to the WhiA family.

Involved in cell division and chromosome segregation. This Bifidobacterium longum (strain NCC 2705) protein is Probable cell division protein WhiA.